A 331-amino-acid chain; its full sequence is MIFRLADFHFPDSAARLYPDTPQRPWILEVGFGDGRFWPHYAATFPEAPNYLGVEISGVSLLKAERRLREAGLSNAVLTKLPATPLIREVVPAGSLDAIVVNFPDPWPKAGHAEHRLLRAPFFRLAASRLKPGGAVLLTTDHDEYFEFACREAEASGVMRAELTDPPPAALETKYARKWRELGLEVQHARFVPTHHPHVPHGTVARFPDSEDAPAVPHAILTLPAAFDPGAFHKHTARGGQTREDPVGWTVVLLELYRSLKQDGWVMLAHVVEGELTQEVLIGISARGDGSHLVRLASFGGPIITPGVKAAVGVVTDWLEEQGAAVRHRGY.

S-adenosyl-L-methionine contacts are provided by glutamate 29, glutamate 55, and aspartate 105. Residue aspartate 105 is part of the active site. Residues lysine 109 and aspartate 141 each contribute to the substrate site.

It belongs to the class I-like SAM-binding methyltransferase superfamily. TrmB family.

The enzyme catalyses guanosine(46) in tRNA + S-adenosyl-L-methionine = N(7)-methylguanosine(46) in tRNA + S-adenosyl-L-homocysteine. The protein operates within tRNA modification; N(7)-methylguanine-tRNA biosynthesis. Its function is as follows. Catalyzes the formation of N(7)-methylguanine at position 46 (m7G46) in tRNA. The sequence is that of tRNA (guanine-N(7)-)-methyltransferase from Deinococcus geothermalis (strain DSM 11300 / CIP 105573 / AG-3a).